The sequence spans 439 residues: D-erythronate kinase (439 aa).

Residues Ser-253, 366–369 (GGDV), and Gly-412 each bind ATP.

The protein belongs to the four-carbon acid sugar kinase family.

The catalysed reaction is D-erythronate + ATP = 4-phospho-D-erythronate + ADP + H(+). Catalyzes the ATP-dependent phosphorylation of D-erythronate to D-erythronate 4-phosphate. Can also phosphorylate D-threonate and 4-hydroxy-L-threonine, with lower efficiency. This Heliobacterium modesticaldum (strain ATCC 51547 / Ice1) protein is D-erythronate kinase.